A 504-amino-acid chain; its full sequence is Pre-mRNA-processing factor 19 (504 aa).

Serine 2 carries the post-translational modification N-acetylserine. One can recognise a U-box domain in the interval 2-73 (SLICSISNEV…KPPSATSIPA (72 aa)). The segment at 68-223 (ATSIPAILKA…VGLHSASIPG (156 aa)) is may mediate interaction with PSMC5. An N6-acetyllysine mark is found at lysine 122, lysine 179, lysine 244, and lysine 261. One copy of the WD 1 repeat lies at 219-259 (ASIPGILALDLCPSDTNKILTGGADKNVVVFDKSTEQILAT). WD repeat units follow at residues 262 to 301 (GHTK…CVQV), 304 to 345 (AHES…TKVT), 348 to 387 (TSGC…NVAN), 390 to 429 (GHSG…NFKT), 433 to 472 (DNNF…LHFT), and 473 to 503 (EHSG…KFYS).

The protein belongs to the WD repeat PRP19 family. Homotetramer. Component of activated, catalytic and post-catalytic spliceosomes. Component of the Prp19 complex/PRP19C/Nineteen complex/NTC and related complexes described as PRP19-CDC5L splicing complex and PSO4 complex. A homotetramer of PRPF19, CDC5L, PLRG1 and BCAS2 constitute the core of those complexes. The interaction with CDC5L, PLRG1 and BCAS2 is direct within this core complex. At least three less stably associated proteins CTNNBL1, CWC15 and HSPA8 are found in the Prp19 complex. The Prp19 complex associates with the spliceosome during its assembly and remodeling recruiting additional proteins. Component of the XAB2 complex, a multimeric protein complex composed of XAB2, PRPF19, AQR, ZNF830, ISY1, and PPIE. Interacts with CWC22 and EIF4A3 in an RNA-independent manner. Interacts with RPA1 and RPA2; the PRP19-CDC5L complex is recruited to the sites of DNA repair where it interacts with the replication protein A complex (RPA). Interacts with SETMAR; required for SETMAR recruitment to site of DNA damage. Interacts with U2AF2; the interaction is direct and recruits the Prp19 complex to RNA polymerase II C-terminal domain (CTD) and the pre-mRNA. Interacts with PRPF3. Interacts with APEX1, DNTT and PSMB4. Interacts with KNSTRN. Interacts with PSMC5. Isoform 2 (via N-terminus) interacts with PPIA. Isoform 2 does not interact with CDC5L. Interacts with KHDC4. Interacts with USB1. Interacts with DDX41. As to expression, expressed in white and brown adipose tissues, brain and to a lower extent in liver, kidney, muscle, lung and spleen (at protein level).

It localises to the nucleus. The protein localises to the nucleoplasm. The protein resides in the cytoplasm. It is found in the cytoskeleton. Its subcellular location is the spindle. It localises to the lipid droplet. It carries out the reaction S-ubiquitinyl-[E2 ubiquitin-conjugating enzyme]-L-cysteine + [acceptor protein]-L-lysine = [E2 ubiquitin-conjugating enzyme]-L-cysteine + N(6)-ubiquitinyl-[acceptor protein]-L-lysine.. It participates in protein modification; protein ubiquitination. In terms of biological role, ubiquitin-protein ligase which is a core component of several complexes mainly involved in pre-mRNA splicing and DNA repair. Required for pre-mRNA splicing as component of the spliceosome. Core component of the PRP19C/Prp19 complex/NTC/Nineteen complex which is part of the spliceosome and participates in its assembly, its remodeling and is required for its activity. During assembly of the spliceosome, mediates 'Lys-63'-linked polyubiquitination of the U4 spliceosomal protein PRPF3. Ubiquitination of PRPF3 allows its recognition by the U5 component PRPF8 and stabilizes the U4/U5/U6 tri-snRNP spliceosomal complex. Recruited to RNA polymerase II C-terminal domain (CTD) and the pre-mRNA, it may also couple the transcriptional and spliceosomal machineries. The XAB2 complex, which contains PRPF19, is also involved in pre-mRNA splicing, transcription and transcription-coupled repair. Beside its role in pre-mRNA splicing PRPF19, as part of the PRP19-CDC5L complex, plays a role in the DNA damage response/DDR. It is recruited to the sites of DNA damage by the RPA complex where PRPF19 directly ubiquitinates RPA1 and RPA2. 'Lys-63'-linked polyubiquitination of the RPA complex allows the recruitment of the ATR-ATRIP complex and the activation of ATR, a master regulator of the DNA damage response. May also play a role in DNA double-strand break (DSB) repair by recruiting the repair factor SETMAR to altered DNA. As part of the PSO4 complex may also be involved in the DNA interstrand cross-links/ICLs repair process. In addition, may also mediate 'Lys-48'-linked polyubiquitination of substrates and play a role in proteasomal degradation. May play a role in the biogenesis of lipid droplets. May play a role in neural differentiation possibly through its function as part of the spliceosome. Functionally, forced expression leads to suppression of neuronal differentiation, and on the contrary to stimulation of astroglial cell differentiation in retinoic acid-primed P19 cells. In Mus musculus (Mouse), this protein is Pre-mRNA-processing factor 19.